A 1244-amino-acid chain; its full sequence is Superkiller complex protein 2 (1244 aa).

The interval 218–249 (LDLSGGDEDEGEAAGGPRGDNASPSPSGTPLV) is disordered. Residues Ser242 and Ser253 each carry the phosphoserine modification. The Helicase ATP-binding domain occupies 316-472 (ILHLEQHDSV…WIGRLKRRQI (157 aa)). 329–336 (AHTSAGKT) is a binding site for ATP. The short motif at 420-423 (DEVH) is the DEVH box element. The region spanning 582 to 752 (GLTSLDLTTS…LTYTMILNLL (171 aa)) is the Helicase C-terminal domain.

It belongs to the helicase family. SKI2 subfamily. Component of the SKI complex which consists of SKIC2, SKIC3 and SKIC8. Interacts with HBS1L isoform 2.

Its subcellular location is the nucleus. It localises to the cytoplasm. It catalyses the reaction ATP + H2O = ADP + phosphate + H(+). In terms of biological role, helicase component of the SKI complex, a multiprotein complex that assists the RNA-degrading exosome during the mRNA decay and quality-control pathways. The SKI complex catalyzes mRNA extraction from 80S ribosomal complexes in the 3'-5' direction and channels mRNA to the cytosolic exosome for degradation. SKI-mediated extraction of mRNA from stalled ribosomes allow binding of the Pelota-HBS1L complex and subsequent ribosome disassembly by ABCE1 for ribosome recycling. In the nucleus, the SKI complex associates with transcriptionally active genes in a manner dependent on PAF1 complex (PAF1C). In Mus musculus (Mouse), this protein is Superkiller complex protein 2.